The sequence spans 356 residues: DNA polymerase IV (356 aa).

The UmuC domain maps to 1-188; that stretch reads MDTSRKIIHI…IPVTKFYGVG (188 aa). 2 residues coordinate Mg(2+): Asp11 and Asp106. Residue Glu107 is part of the active site.

The protein belongs to the DNA polymerase type-Y family. As to quaternary structure, monomer. Mg(2+) serves as cofactor.

It localises to the cytoplasm. It catalyses the reaction DNA(n) + a 2'-deoxyribonucleoside 5'-triphosphate = DNA(n+1) + diphosphate. Its function is as follows. Poorly processive, error-prone DNA polymerase involved in untargeted mutagenesis. Copies undamaged DNA at stalled replication forks, which arise in vivo from mismatched or misaligned primer ends. These misaligned primers can be extended by PolIV. Exhibits no 3'-5' exonuclease (proofreading) activity. May be involved in translesional synthesis, in conjunction with the beta clamp from PolIII. The sequence is that of DNA polymerase IV from Listeria monocytogenes serovar 1/2a (strain ATCC BAA-679 / EGD-e).